Here is a 313-residue protein sequence, read N- to C-terminus: E3 ubiquitin-protein ligase SINA-like 2 (313 aa).

The disordered stretch occupies residues 1-26; it reads MSGEASTSRRKRQRVPSSVESVENGG. An RING-type zinc finger spans residues 44 to 80; it reads CPICCHALTSPIFQCDNGHIACSSCCTKLRNKCPSCA. The segment at 94-277 is SBD; sequence VVEAVMVTCP…LKMEICIRKL (184 aa). The segment at 97 to 155 adopts an SIAH-type zinc-finger fold; that stretch reads AVMVTCPNVKHGCTEKFSYGKELIHEKDCRFALCYCPAPNCNYSGVYKDLYSHFYVNHY. Residues cysteine 102, cysteine 109, histidine 121, cysteine 125, cysteine 132, cysteine 137, histidine 149, and histidine 154 each contribute to the Zn(2+) site. The segment at 278 to 313 is disordered; the sequence is KKDEEEADEDEESEEEEDDDDDDDDDDEEEDADEEE. The segment covering 282-313 has biased composition (acidic residues); sequence EEADEDEESEEEEDDDDDDDDDDEEEDADEEE.

It belongs to the SINA (Seven in absentia) family.

The catalysed reaction is S-ubiquitinyl-[E2 ubiquitin-conjugating enzyme]-L-cysteine + [acceptor protein]-L-lysine = [E2 ubiquitin-conjugating enzyme]-L-cysteine + N(6)-ubiquitinyl-[acceptor protein]-L-lysine.. Its pathway is protein modification; protein ubiquitination. E3 ubiquitin-protein ligase that mediates ubiquitination and subsequent proteasomal degradation of target proteins. E3 ubiquitin ligases accept ubiquitin from an E2 ubiquitin-conjugating enzyme in the form of a thioester and then directly transfers the ubiquitin to targeted substrates. It probably triggers the ubiquitin-mediated degradation of different substrates. This Arabidopsis thaliana (Mouse-ear cress) protein is E3 ubiquitin-protein ligase SINA-like 2.